We begin with the raw amino-acid sequence, 307 residues long: Acyl transferase (307 aa).

Active-site charge relay system residues include S116, D213, and H243.

The protein belongs to the LuxD family.

It participates in lipid metabolism; fatty acid reduction for biolumincescence. In terms of biological role, acyl transferase is part of the fatty acid reductase system required for aldehyde biosynthesis; it produces fatty acids for the luminescent reaction. This Photorhabdus luminescens (Xenorhabdus luminescens) protein is Acyl transferase.